Reading from the N-terminus, the 205-residue chain is MDIHVWLAYLLTAVVFSLAPGSGTVNSISNGLSYGTRHSLGAIIGLQIGLACHIVLVGIGIGALVAQSALAFTLIKWIGAAYLVWLGIQKWRDRAPLTATTTSHELSQAALLRKAVLINLTNPKSIVFLVALFPQFIDPTRDHWPQFLVLGITTVTIDAIVMFGYTALAAQLGRYIRSPNIMTRMNKLFGSMFMGCGMLLATAKA.

Helical transmembrane passes span valine 5–valine 25, glycine 41–isoleucine 61, serine 68–isoleucine 88, leucine 117–isoleucine 137, and phenylalanine 147–alanine 167.

The protein belongs to the Rht family.

It is found in the cell inner membrane. Functionally, involved in positive regulation of motility and negative regulation of biofilm formation. This is an uncharacterized protein from Vibrio cholerae serotype O1 (strain ATCC 39315 / El Tor Inaba N16961).